The chain runs to 136 residues: uncharacterized protein (136 aa).

It is found in the mitochondrion. This is an uncharacterized protein from Arabidopsis thaliana (Mouse-ear cress).